A 255-amino-acid polypeptide reads, in one-letter code: Small ribosomal subunit protein eS1 (255 aa).

Basic residues predominate over residues 1 to 18 (MAVGKNKRLSKGKKGLKK). The segment at 1 to 28 (MAVGKNKRLSKGKKGLKKRTQDPFSRKD) is disordered. At Ala2 the chain carries N-acetylalanine; partial. Positions 19–28 (RTQDPFSRKD) are enriched in basic and acidic residues.

The protein belongs to the eukaryotic ribosomal protein eS1 family. As to quaternary structure, component of the small ribosomal subunit. Mature ribosomes consist of a small (40S) and a large (60S) subunit. The 40S subunit contains about 33 different proteins and 1 molecule of RNA (18S). The 60S subunit contains about 49 different proteins and 3 molecules of RNA (25S, 5.8S and 5S).

The protein resides in the cytoplasm. This Ajellomyces capsulatus (strain G186AR / H82 / ATCC MYA-2454 / RMSCC 2432) (Darling's disease fungus) protein is Small ribosomal subunit protein eS1.